Here is a 187-residue protein sequence, read N- to C-terminus: Ribosome-recycling factor (187 aa).

It belongs to the RRF family.

The protein localises to the cytoplasm. Functionally, responsible for the release of ribosomes from messenger RNA at the termination of protein biosynthesis. May increase the efficiency of translation by recycling ribosomes from one round of translation to another. In Paracoccus denitrificans (strain Pd 1222), this protein is Ribosome-recycling factor.